Here is a 132-residue protein sequence, read N- to C-terminus: Fertilization-influencing membrane protein (132 aa).

The chain crosses the membrane as a helical span at residues 100 to 120; it reads PGLFHHILVGLLVVAFFFLLF.

Testis-specific.

It is found in the cell membrane. May play a role in sperm-oocyte fusion during fertilization. This Homo sapiens (Human) protein is Fertilization-influencing membrane protein.